The sequence spans 127 residues: Large ribosomal subunit protein bL17 (127 aa).

Belongs to the bacterial ribosomal protein bL17 family. Part of the 50S ribosomal subunit. Contacts protein L32.

This is Large ribosomal subunit protein bL17 from Actinobacillus pleuropneumoniae serotype 7 (strain AP76).